Reading from the N-terminus, the 361-residue chain is S-adenosylmethionine:tRNA ribosyltransferase-isomerase (361 aa).

Belongs to the QueA family. In terms of assembly, monomer.

It localises to the cytoplasm. It carries out the reaction 7-aminomethyl-7-carbaguanosine(34) in tRNA + S-adenosyl-L-methionine = epoxyqueuosine(34) in tRNA + adenine + L-methionine + 2 H(+). It participates in tRNA modification; tRNA-queuosine biosynthesis. Functionally, transfers and isomerizes the ribose moiety from AdoMet to the 7-aminomethyl group of 7-deazaguanine (preQ1-tRNA) to give epoxyqueuosine (oQ-tRNA). The chain is S-adenosylmethionine:tRNA ribosyltransferase-isomerase from Haemophilus ducreyi (strain 35000HP / ATCC 700724).